Consider the following 193-residue polypeptide: MLENLEKYKIILASNSPRRKELLSGLGIKYEVKTLPGIEETYPDTLKAEEIPLYIACEKAAAYRNTMHPDELIITADTIVWLDGVVMGKPHNEDDARQMLWKLSGKTHQVITGVCLTTVGAQRSFSAVTEVTFAELSDEEIDYYIRVYKPMDKAGSYGIQEWIGFIGVRGISGSYFNVMGLPVQRLYTELKKL.

Asp-77 (proton acceptor) is an active-site residue.

This sequence belongs to the Maf family. YhdE subfamily. Requires a divalent metal cation as cofactor.

It is found in the cytoplasm. It carries out the reaction dTTP + H2O = dTMP + diphosphate + H(+). It catalyses the reaction UTP + H2O = UMP + diphosphate + H(+). Its function is as follows. Nucleoside triphosphate pyrophosphatase that hydrolyzes dTTP and UTP. May have a dual role in cell division arrest and in preventing the incorporation of modified nucleotides into cellular nucleic acids. The protein is dTTP/UTP pyrophosphatase of Phocaeicola vulgatus (strain ATCC 8482 / DSM 1447 / JCM 5826 / CCUG 4940 / NBRC 14291 / NCTC 11154) (Bacteroides vulgatus).